A 602-amino-acid polypeptide reads, in one-letter code: T-box transcription factor TBX15 (602 aa).

Residues 46-84 (ALSPAGPLGDTEDAAAHGLEPHPDSEQSTGSDSEVLTER) are disordered. The segment covering 71-84 (EQSTGSDSEVLTER) has biased composition (polar residues). Residues 122-304 (LWKRFHDIGT…RNPFAKGFRD (183 aa)) constitute a DNA-binding region (T-box). Thr330 carries the post-translational modification Phosphothreonine. Disordered stretches follow at residues 338–369 (QKQQGGSTGTSPTTSSTGTPSPSASSHLLSPS) and 425–447 (QSGTTSATQPSETFMPQRTPSLI). The span at 346-369 (GTSPTTSSTGTPSPSASSHLLSPS) shows a compositional bias: low complexity. Residues 425 to 446 (QSGTTSATQPSETFMPQRTPSL) are compositionally biased toward polar residues.

In terms of assembly, can form a heterodimer with TBX18.

The protein resides in the nucleus. Probable transcriptional regulator involved in the development of the skeleton of the limb, vertebral column and head. Acts by controlling the number of mesenchymal precursor cells and chondrocytes. The chain is T-box transcription factor TBX15 (TBX15) from Homo sapiens (Human).